The chain runs to 427 residues: Enolase (427 aa).

Residue Gln-163 coordinates (2R)-2-phosphoglycerate. Glu-205 serves as the catalytic Proton donor. The Mg(2+) site is built by Asp-242, Glu-283, and Asp-310. Residues Lys-335, Arg-364, Ser-365, and Lys-386 each coordinate (2R)-2-phosphoglycerate. Catalysis depends on Lys-335, which acts as the Proton acceptor.

The protein belongs to the enolase family. Mg(2+) is required as a cofactor.

It localises to the cytoplasm. Its subcellular location is the secreted. The protein localises to the cell surface. The enzyme catalyses (2R)-2-phosphoglycerate = phosphoenolpyruvate + H2O. Its pathway is carbohydrate degradation; glycolysis; pyruvate from D-glyceraldehyde 3-phosphate: step 4/5. Catalyzes the reversible conversion of 2-phosphoglycerate (2-PG) into phosphoenolpyruvate (PEP). It is essential for the degradation of carbohydrates via glycolysis. The sequence is that of Enolase from Salinispora tropica (strain ATCC BAA-916 / DSM 44818 / JCM 13857 / NBRC 105044 / CNB-440).